The primary structure comprises 189 residues: Hypoxanthine/guanine phosphoribosyltransferase (189 aa).

It belongs to the purine/pyrimidine phosphoribosyltransferase family. Archaeal HPRT subfamily. As to quaternary structure, homodimer.

Its subcellular location is the cytoplasm. It catalyses the reaction IMP + diphosphate = hypoxanthine + 5-phospho-alpha-D-ribose 1-diphosphate. The enzyme catalyses GMP + diphosphate = guanine + 5-phospho-alpha-D-ribose 1-diphosphate. Its pathway is purine metabolism; IMP biosynthesis via salvage pathway; IMP from hypoxanthine: step 1/1. In terms of biological role, catalyzes a salvage reaction resulting in the formation of IMP that is energically less costly than de novo synthesis. This chain is Hypoxanthine/guanine phosphoribosyltransferase, found in Methanothrix soehngenii (strain ATCC 5969 / DSM 3671 / JCM 10134 / NBRC 103675 / OCM 69 / GP-6) (Methanosaeta concilii).